Here is a 284-residue protein sequence, read N- to C-terminus: tRNA N(3)-cytidine methyltransferase METTL6 (284 aa).

Residues Trp-45 and Tyr-49 each contribute to the S-adenosyl-L-methionine site. S-adenosyl-L-homocysteine contacts are provided by Tyr-49, His-61, Glu-85, Gly-87, Asp-110, Asp-136, Leu-137, and Ile-157. Positions 87, 110, 136, 137, and 157 each coordinate S-adenosyl-L-methionine.

It belongs to the methyltransferase superfamily. METL family. In terms of assembly, monomer. Interacts with SARS1/SerRS; interaction is mediated via tRNA(Ser) and is required for N(3)-methylcytidine methylation.

The protein resides in the cytoplasm. The protein localises to the nucleus. It catalyses the reaction cytidine(32) in tRNA(Ser) + S-adenosyl-L-methionine = N(3)-methylcytidine(32) in tRNA(Ser) + S-adenosyl-L-homocysteine + H(+). Its function is as follows. S-adenosyl-L-methionine-dependent methyltransferase that mediates N(3)-methylcytidine modification of residue 32 of the tRNA anticodon loop of tRNA(Ser), including tRNA(Ser)(UGA) and tRNA(Ser)(GCU). Interaction with SARS1/SerRS is required for N(3)-methylcytidine methylation. In Homo sapiens (Human), this protein is tRNA N(3)-cytidine methyltransferase METTL6.